We begin with the raw amino-acid sequence, 319 residues long: Ciliary microtubule inner protein 2A (319 aa).

Belongs to the CIMIP2 family. In terms of assembly, microtubule inner protein component of sperm flagellar doublet microtubules.

The protein localises to the cytoplasm. It localises to the cytoskeleton. It is found in the flagellum axoneme. Its function is as follows. Microtubule inner protein (MIP) part of the dynein-decorated doublet microtubules (DMTs) in flagellum axoneme. Binds to the intra-tubulin interfaces. This is Ciliary microtubule inner protein 2A (Cimip2a) from Mus musculus (Mouse).